The primary structure comprises 450 residues: 3-phosphoshikimate 1-carboxyvinyltransferase (450 aa).

The tract at residues 1 to 26 (MSAHGDPIPMTAHPSGPLSGTAQVPG) is disordered. Positions 28, 29, and 33 each coordinate 3-phosphoshikimate. Lysine 28 contributes to the phosphoenolpyruvate binding site. Phosphoenolpyruvate contacts are provided by glycine 101 and arginine 129. Residues serine 174, glutamine 176, aspartate 327, and lysine 354 each contribute to the 3-phosphoshikimate site. Glutamine 176 provides a ligand contact to phosphoenolpyruvate. Aspartate 327 acts as the Proton acceptor in catalysis. Phosphoenolpyruvate contacts are provided by arginine 358 and arginine 403.

The protein belongs to the EPSP synthase family. In terms of assembly, monomer.

It is found in the cytoplasm. The catalysed reaction is 3-phosphoshikimate + phosphoenolpyruvate = 5-O-(1-carboxyvinyl)-3-phosphoshikimate + phosphate. Its pathway is metabolic intermediate biosynthesis; chorismate biosynthesis; chorismate from D-erythrose 4-phosphate and phosphoenolpyruvate: step 6/7. In terms of biological role, catalyzes the transfer of the enolpyruvyl moiety of phosphoenolpyruvate (PEP) to the 5-hydroxyl of shikimate-3-phosphate (S3P) to produce enolpyruvyl shikimate-3-phosphate and inorganic phosphate. The polypeptide is 3-phosphoshikimate 1-carboxyvinyltransferase (Dinoroseobacter shibae (strain DSM 16493 / NCIMB 14021 / DFL 12)).